Here is a 205-residue protein sequence, read N- to C-terminus: RPW8-like protein 2 (205 aa).

Positions 1 to 153 (MPLTEIIAGA…IMGQPIDCII (153 aa)) constitute an RPW8 domain. The helical transmembrane segment at 7–23 (IAGAALGLALQILHEAI) threads the bilayer. Coiled coils occupy residues 70–92 (EDLK…LKRR) and 125–147 (ADIK…IMGQ).

It belongs to the plant RPW8 protein family.

It localises to the membrane. In terms of biological role, probable disease resistance (R) protein. This chain is RPW8-like protein 2, found in Arabidopsis thaliana (Mouse-ear cress).